A 271-amino-acid chain; its full sequence is Ribonuclease 3 (271 aa).

An RNase III domain is found at 5–139; it reads PALLELKLDY…IMAAIYLDGG (135 aa). Glu-52 contacts Mg(2+). Residue Asp-56 is part of the active site. Residues Asp-125 and Glu-128 each contribute to the Mg(2+) site. Glu-128 is a catalytic residue. Residues 172 to 241 form the DRBM domain; that stretch reads NFKSALQELA…ARGLYERLMG (70 aa). The interval 241–271 is disordered; sequence GDPIVPLPDDSPGDSPDDSGDAAESGVISAT. Positions 251-261 are enriched in acidic residues; that stretch reads SPGDSPDDSGD.

This sequence belongs to the ribonuclease III family. Homodimer. Requires Mg(2+) as cofactor.

The protein resides in the cytoplasm. The catalysed reaction is Endonucleolytic cleavage to 5'-phosphomonoester.. Digests double-stranded RNA. Involved in the processing of primary rRNA transcript to yield the immediate precursors to the large and small rRNAs (23S and 16S). Processes some mRNAs, and tRNAs when they are encoded in the rRNA operon. Processes pre-crRNA and tracrRNA of type II CRISPR loci if present in the organism. This chain is Ribonuclease 3, found in Solibacter usitatus (strain Ellin6076).